A 704-amino-acid polypeptide reads, in one-letter code: MSPRQPLVLVFLVLGCCSAAPRPHKPTVVVFPGDLRTNLTDKQLAEEYLFRYGYTQVAELSNDKQSLSRGLRLLQRRLALPETGELDKTTLEAMRAPRCGVPDLGKFQTFEGDLKWHHNDITYWIQNYSEDLPRDVIDDAFARAFAVWSAVTPLTFTRVYGPEADIIIQFGVREHGDGYPFDGKNGLLAHAFPPGPGIQGDAHFDDEELWTLGKGVVVPTHFGNADGAPCHFPFTFEGRSYSACTTDGRSDDTPWCSTTADYDTDRRFGFCPSEKLYAQDGNGDGKPCVFPFTFEGRSYSTCTTDGRSDGYRWCSTTADYDQDKLYGFCPTRVDSAVTGGNSAGEPCVFPFIFLGKQYSTCTREGRGDGHLWCATTSNFDRDKKWGFCPDQGYSLFLVAAHEFGHALGLDHSSVPEALMYPMYSFTEGPPLHEDDVRGIQHLYGPRPEPEPQPPTAPPTAPPTVCATGPPTTRPSERPTAGPTGPPAAGPTGPPTAGPSEAPTVPVDPAEDICKVNIFDAIAEIRNYLHFFKEGKYWRFSKGKGRRVQGPFLSPSTWPALPRKLDSAFEDGLTKKTFFFSGRQVWVYTGTSVVGPRRLDKLGLGPEVTQVTGALPQGGGKVLLFSRQRFWSFDVKTQTVDPRSAGSVEQMYPGVPLNTHDIFQYQEKAYFCQDRFYWRVNSRNEVNQVDEVGYVTFDILQCPED.

Positions 1 to 19 (MSPRQPLVLVFLVLGCCSA) are cleaved as a signal peptide. A propeptide spans 20-106 (APRPHKPTVV…PRCGVPDLGK (87 aa)) (activation peptide). The N-linked (GlcNAc...) asparagine glycan is linked to N38. The short motif at 97 to 104 (PRCGVPDL) is the Cysteine switch element. C99 contributes to the Zn(2+) binding site. A glycan (N-linked (GlcNAc...) asparagine) is linked at N127. Ca(2+)-binding residues include D131 and D165. Residues H175 and D177 each contribute to the Zn(2+) site. Positions 182, 183, 185, and 187 each coordinate Ca(2+). H190 is a Zn(2+) binding site. Ca(2+) is bound by residues G197, Q199, and D201. H203 is a Zn(2+) binding site. Ca(2+) is bound by residues D205, D206, and E208. Fibronectin type-II domains lie at 225 to 273 (ADGA…FCPS), 283 to 331 (GDGK…FCPT), and 342 to 390 (SAGE…FCPD). 6 cysteine pairs are disulfide-bonded: C230–C256, C244–C271, C288–C314, C302–C329, C347–C373, and C361–C388. H401 serves as a coordination point for Zn(2+). E402 is a catalytic residue. Residues H405 and H411 each contribute to the Zn(2+) site. Positions 434–507 (DDVRGIQHLY…PSEAPTVPVD (74 aa)) are disordered. Pro residues-rich tracts occupy residues 450–461 (EPQPPTAPPTAP) and 483–496 (TGPP…PPTA). C513 and C701 are joined by a disulfide. Hemopexin repeat units follow at residues 515–560 (VNIF…WPAL), 561–605 (PRKL…GLGP), 607–654 (VTQV…YPGV), and 655–701 (PLNT…ILQC).

The protein belongs to the peptidase M10A family. As to quaternary structure, exists as monomer or homodimer; disulfide-linked. Also exists as heterodimer with LCN2. Macrophages and transformed cell lines produce only the monomeric form. Interacts with ECM1. Zn(2+) is required as a cofactor. Requires Ca(2+) as cofactor. N- and O-glycosylated.

The protein localises to the secreted. Its subcellular location is the extracellular space. The protein resides in the extracellular matrix. The enzyme catalyses Cleavage of gelatin types I and V and collagen types IV and V.. Matrix metalloproteinase that plays an essential role in local proteolysis of the extracellular matrix and in leukocyte migration. Could play a role in bone osteoclastic resorption. Cleaves KiSS1 at a Gly-|-Leu bond. Cleaves NINJ1 to generate the Secreted ninjurin-1 form. Cleaves type IV and type V collagen into large C-terminal three quarter fragments and shorter N-terminal one quarter fragments. Degrades fibronectin but not laminin or Pz-peptide. The protein is Matrix metalloproteinase-9 (MMP9) of Canis lupus familiaris (Dog).